The following is a 423-amino-acid chain: Protein IQ-DOMAIN 16 (423 aa).

2 consecutive IQ domains span residues 99 to 127 and 128 to 150; these read RHWA…GIVK and LQAL…CIKA. Residues 231–251 are a coiled coil; sequence QKKLEIAIKREKAQALALSNQ. The tract at residues 235-252 is calmodulin-binding; that stretch reads EIAIKREKAQALALSNQI.

Belongs to the IQD family. As to quaternary structure, binds to multiple calmodulin (CaM) in the presence of Ca(2+) and CaM-like proteins.

The protein resides in the cytoplasm. It is found in the cytoskeleton. Its subcellular location is the cell membrane. May be involved in cooperative interactions with calmodulins or calmodulin-like proteins. Recruits calmodulin proteins to microtubules, thus being a potential scaffold in cellular signaling and trafficking. Regulates cell shape and elongation in aerial organs (i.e. cotyledons, leaves, and hypocotyls) probably by regulating cortical microtubules (MT) arrays orientation. May associate with nucleic acids and regulate gene expression at the transcriptional or post-transcriptional level. The polypeptide is Protein IQ-DOMAIN 16 (Arabidopsis thaliana (Mouse-ear cress)).